A 168-amino-acid chain; its full sequence is Lipoprotein signal peptidase (168 aa).

3 helical membrane passes run 8 to 28 (LYYL…WLVV), 61 to 81 (GQFW…VIYI), and 91 to 111 (FGIA…DRIF). Active-site residues include aspartate 117 and aspartate 135. The chain crosses the membrane as a helical span at residues 128–148 (FPIFNVADAALTIGVALMFIY).

It belongs to the peptidase A8 family.

It localises to the cell membrane. The enzyme catalyses Release of signal peptides from bacterial membrane prolipoproteins. Hydrolyzes -Xaa-Yaa-Zaa-|-(S,diacylglyceryl)Cys-, in which Xaa is hydrophobic (preferably Leu), and Yaa (Ala or Ser) and Zaa (Gly or Ala) have small, neutral side chains.. It functions in the pathway protein modification; lipoprotein biosynthesis (signal peptide cleavage). Its function is as follows. This protein specifically catalyzes the removal of signal peptides from prolipoproteins. The protein is Lipoprotein signal peptidase of Anoxybacillus flavithermus (strain DSM 21510 / WK1).